The chain runs to 329 residues: Serine dehydratase-like (329 aa).

An N-acetylmethionine modification is found at Met1. Lys48 is subject to N6-(pyridoxal phosphate)lysine.

The protein belongs to the serine/threonine dehydratase family. Monomer. Homodimer. Pyridoxal 5'-phosphate serves as cofactor. As to expression, expressed in lung cancer cell lines.

It catalyses the reaction L-serine = pyruvate + NH4(+). It carries out the reaction L-threonine = 2-oxobutanoate + NH4(+). The catalysed reaction is L-glutamate = D-glutamate. Catalyzes the pyridoxal-phosphate-dependent dehydrative deamination of L-threonine and L-serine to ammonia and alpha-ketobutyrate and pyruvate, respectively. Also exhibits racemase activity towards L-glutamate and D-glutamate. The protein is Serine dehydratase-like (SDSL) of Homo sapiens (Human).